The following is a 346-amino-acid chain: NADH-quinone oxidoreductase subunit H (346 aa).

9 consecutive transmembrane segments (helical) span residues 13-33 (ILLILLQCLLLVVPLLVALAF), 51-71 (PNVVGAFGLLQSFADFLKYIV), 83-103 (AVYFLAPIVSLVMALIAWAVI), 116-136 (VAVLYVFAVSSLEVYGVIMGG), 162-182 (IGLIIIGVIISTGSMNFTAIV), 191-211 (LLNWYFLPHFPMLFLFFISAL), 244-264 (FMIGELVAVVLMCALTVLLFF), 278-298 (VFWMILKMLAVFFMFSMVKAI), and 310-330 (LGWKVFLPFSLFWVVFVAFMA).

It belongs to the complex I subunit 1 family. As to quaternary structure, NDH-1 is composed of 14 different subunits. Subunits NuoA, H, J, K, L, M, N constitute the membrane sector of the complex.

It localises to the cell inner membrane. It carries out the reaction a quinone + NADH + 5 H(+)(in) = a quinol + NAD(+) + 4 H(+)(out). In terms of biological role, NDH-1 shuttles electrons from NADH, via FMN and iron-sulfur (Fe-S) centers, to quinones in the respiratory chain. The immediate electron acceptor for the enzyme in this species is believed to be ubiquinone. Couples the redox reaction to proton translocation (for every two electrons transferred, four hydrogen ions are translocated across the cytoplasmic membrane), and thus conserves the redox energy in a proton gradient. This subunit may bind ubiquinone. The polypeptide is NADH-quinone oxidoreductase subunit H (Jannaschia sp. (strain CCS1)).